We begin with the raw amino-acid sequence, 1135 residues long: Putative beta-hexosaminidase (1135 aa).

Residues 1-23 form the signal peptide; it reads MKWVKSGVGILGILLTICHAVTS. Disordered regions lie at residues 970-1082 and 1107-1135; these read AHPP…LPGQ and QMRG…QQAG. Pro residues predominate over residues 986-1003; sequence NMPPPFPPRPPFGPPMLP. Composition is skewed to low complexity over residues 1004 to 1026 and 1043 to 1073; these read PGQM…TALG and TGQA…LPGQ.

The protein belongs to the glycosyl hydrolase 20 family. In terms of tissue distribution, prismatic layer of shell (at protein level). Expressed primarily in the mantle with highest level in the mantle edge and lower level in the mantle pallium.

The protein localises to the secreted. The enzyme catalyses Hydrolysis of terminal non-reducing N-acetyl-D-hexosamine residues in N-acetyl-beta-D-hexosaminides.. The protein operates within glycan degradation; chitin degradation. The sequence is that of Putative beta-hexosaminidase from Margaritifera margaritifera (Freshwater pearl mussel).